The following is a 697-amino-acid chain: Disintegrin and metalloproteinase domain-containing protein 26A (697 aa).

A signal peptide spans 1–22 (MFLKFCLWTMFFFSAWSPIGHA). The propeptide occupies 23–187 (KYSSLLEVVT…NAPTLLQIPY (165 aa)). A glycan (N-linked (GlcNAc...) asparagine) is linked at Asn127. The short motif at 159 to 166 (MRCGLSEE) is the Cysteine switch element. A Zn(2+)-binding site is contributed by Cys161. Over 188-671 (ENWWTHHRFI…PPLPLSHSKW (484 aa)) the chain is Extracellular. The Peptidase M12B domain maps to 195-385 (RFIEYFVVLD…TKRSCLYDIP (191 aa)). N-linked (GlcNAc...) asparagine glycosylation is present at Asn214. 3 disulfides stabilise this stretch: Cys305/Cys380, Cys344/Cys366, and Cys346/Cys351. His329 lines the Zn(2+) pocket. Glu330 is an active-site residue. Positions 333 and 339 each coordinate Zn(2+). N-linked (GlcNAc...) asparagine glycosylation is found at Asn365, Asn391, Asn464, Asn506, Asn531, and Asn573. Positions 392 to 478 (LTVCGNKVVE…ECPGDVYKAD (87 aa)) constitute a Disintegrin domain. A disulfide bridge links Cys450 with Cys470. Residues 616 to 649 (LVSNCSPQLYHMQGICNNKQHCHCGVTWKPPDCQ) enclose the EGF-like domain. Intrachain disulfides connect Cys620-Cys631 and Cys639-Cys648. Residues 672–692 (IVYILIVLDVCIVIIIYLFSF) form a helical membrane-spanning segment. Residues 693 to 697 (YKLSK) are Cytoplasmic-facing.

Zn(2+) serves as cofactor. In terms of tissue distribution, expressed in sperm (at protein level). Expressed specifically in testis.

Its subcellular location is the membrane. Its function is as follows. Sperm surface membrane protein that may be involved in spermatogenesis and fertilization. This chain is Disintegrin and metalloproteinase domain-containing protein 26A, found in Mus musculus (Mouse).